The following is a 1250-amino-acid chain: Probable autotransporter YfaL (1250 aa).

A signal peptide spans 1–28; sequence MRIIFLRKEYLSLLPSMIASLFSANGVA. A disordered region spans residues 914 to 951; sequence RSQEVTPPSPPDPDPTPDPDPTPDPDPTPDPEPTPAYQ. Repeat unit 1 spans residues 919 to 920; it reads TP. Residues 919–948 form a 15 X 2 AA approximate tandem repeats of [DTPE]-P region; sequence TPPSPPDPDPTPDPDPTPDPDPTPDPEPTP. A 2; approximate repeat occupies 921-922; sequence PS. Repeat 3 spans residues 923-924; it reads PP. Residues 925–926 form a 4; approximate repeat; that stretch reads DP. 11 consecutive repeat copies span residues 927-928, 929-930, 931-932, 933-934, 935-936, 937-938, 939-940, 941-942, 943-944, 945-946, and 947-948. The span at 928 to 942 shows a compositional bias: acidic residues; it reads PTPDPDPTPDPDPTP. Positions 980-1250 constitute an Autotransporter domain; that stretch reads AGGDGQTLNL…AGFLSMTVKW (271 aa).

In terms of processing, an approximately 170 kDa protein is detected in the outer membrane, while a C-terminal 55 kDa fragment is detected in whole cells. The full-length putative autotransporter may be cleaved to release the mature protein from the outer membrane; Pefabloc SC, a Ser-Thr protease inhibitor prevents the appearance of the 55 kDa C--terminal fragment.

Its subcellular location is the periplasm. The protein resides in the secreted. It is found in the cell surface. It localises to the cell outer membrane. Probably an autotransporter. Upon overexpression shows increased adherence to polyvinyl chloride (PVC) plates, increased mature biofilm formation. The polypeptide is Probable autotransporter YfaL (yfaL) (Escherichia coli (strain K12)).